A 351-amino-acid polypeptide reads, in one-letter code: Glycerol-1-phosphate dehydrogenase [NAD(P)+] (351 aa).

NAD(+) contacts are provided by residues 97–101 (GKVID) and 119–122 (TSPS). D124 provides a ligand contact to substrate. An NAD(+)-binding site is contributed by S128. D171 contacts substrate. Zn(2+) is bound by residues D171 and H251. H255 contacts substrate. Position 267 (H267) interacts with Zn(2+).

This sequence belongs to the glycerol-1-phosphate dehydrogenase family. In terms of assembly, homodimer. Requires Zn(2+) as cofactor.

It is found in the cytoplasm. The catalysed reaction is sn-glycerol 1-phosphate + NAD(+) = dihydroxyacetone phosphate + NADH + H(+). The enzyme catalyses sn-glycerol 1-phosphate + NADP(+) = dihydroxyacetone phosphate + NADPH + H(+). The protein operates within membrane lipid metabolism; glycerophospholipid metabolism. In terms of biological role, catalyzes the NAD(P)H-dependent reduction of dihydroxyacetonephosphate (DHAP or glycerone phosphate) to glycerol 1-phosphate (G1P). The G1P thus generated is used as the glycerophosphate backbone of phospholipids in the cellular membranes of Archaea. This chain is Glycerol-1-phosphate dehydrogenase [NAD(P)+], found in Saccharolobus solfataricus (strain ATCC 35092 / DSM 1617 / JCM 11322 / P2) (Sulfolobus solfataricus).